The chain runs to 786 residues: Tyrosine-protein kinase Btk (786 aa).

A disordered region spans residues 1 to 23; sequence MMGTKHRNSHVNGSIKSSSSLRS. A compositionally biased stretch (low complexity) spans 14-23; that stretch reads SIKSSSSLRS. The region spanning 41 to 184 is the PH domain; that stretch reads DVVKSGSMVK…WIRAIRQVCE (144 aa). A Btk-type zinc finger spans residues 187–223; sequence NTPKSYRYHPGLWSGKKWSCCKGLSRTTFGCRAAAHW. Positions 195, 206, 207, and 217 each coordinate Zn(2+). Positions 226 to 240 are enriched in low complexity; that stretch reads ANNNPSNGSSPAQNS. Residues 226-301 form a disordered region; sequence ANNNPSNGSS…TPTSLQPQSS (76 aa). Over residues 241 to 260 the composition is skewed to polar residues; sequence TRSISPNSSTTNSQFSLQHN. Residues 264-290 are compositionally biased toward gly residues; the sequence is SLGGGVGGGLGGGGSLGLGGGGGGGGS. The span at 291–301 shows a compositional bias: polar residues; the sequence is CTPTSLQPQSS. An SH3 domain is found at 342 to 402; the sequence is HFVKLVVALY…PSNYVKPKAL (61 aa). Residues 410-503 form the SH2 domain; it reads WYVGDMSRQR…GLACRLKSSP (94 aa). One can recognise a Protein kinase domain in the interval 526 to 779; it reads LMLMEELGSG…FRVLMDQLAL (254 aa). Residues 532 to 540 and K554 contribute to the ATP site; that span reads LGSGQFGVV. D647 (proton acceptor) is an active-site residue. Position 677 is a phosphotyrosine; by autocatalysis (Y677).

Belongs to the protein kinase superfamily. Tyr protein kinase family. TEC subfamily. The cofactor is Zn(2+). As to expression, ring canals in the egg chambers and imaginal disks of third-instar larvae.

The catalysed reaction is L-tyrosyl-[protein] + ATP = O-phospho-L-tyrosyl-[protein] + ADP + H(+). In terms of biological role, required for proper ring canal development. Also required for the development of male genitalia and for adult survival. The protein is Tyrosine-protein kinase Btk of Drosophila melanogaster (Fruit fly).